Consider the following 220-residue polypeptide: Small ribosomal subunit protein eS8 (220 aa).

Belongs to the eukaryotic ribosomal protein eS8 family.

The protein is Small ribosomal subunit protein eS8 (RPS8A) of Leishmania major.